Reading from the N-terminus, the 331-residue chain is Smad-related protein daf-14 (331 aa).

An MH2 domain is found at 134–331 (WCTIFYYELT…NERPEIGSRS (198 aa)). The disordered stretch occupies residues 168-187 (ECRMSLTSQPSSRNSKSSQI). The span at 175–185 (SQPSSRNSKSS) shows a compositional bias: low complexity.

In terms of assembly, interacts with R-SMAD daf-8 and co-SMAD daf-3. Interacts with daf-3 in a daf-8 dependent manner.

Probably an atypical receptor-regulated SMAD (R-SMAD) that is an intracellular signal transducer and transcriptional modulator activated by TGF-beta-like daf-7 signaling. Plays a role in TGF-beta-like daf-7 signaling in regulating entry into a developmentally arrested larval state known as dauer, in response to harsh environmental conditions; partially redundant with R-SMAD daf-8. This chain is Smad-related protein daf-14, found in Caenorhabditis elegans.